The sequence spans 545 residues: Probable intron-encoded endonuclease 4 (545 aa).

The next 7 membrane-spanning stretches (helical) occupy residues 1-21 (MYLS…FFGR), 30-50 (LITC…FFEV), 81-101 (LTVA…IYSI), 119-139 (LFTF…MFVG), 140-160 (WEGV…RIAA), 177-197 (FLTI…YATV), and 200-220 (LAPY…LIGA). The segment at 1–239 (MYLSIIILPL…HVWLPMAMEG (239 aa)) is ndh-5 exons 1 and 2 encoded. The segment at 240–545 (FFSRAFLKLH…NNINKSDYNK (306 aa)) is ndh-5 intron 2 encoded.

The protein in the N-terminal section; belongs to the complex I subunit 5 family. It in the C-terminal section; belongs to the LAGLIDADG endonuclease family.

Its subcellular location is the mitochondrion membrane. Functionally, mitochondrial DNA endonuclease involved in intron homing. In Neurospora crassa (strain ATCC 24698 / 74-OR23-1A / CBS 708.71 / DSM 1257 / FGSC 987), this protein is Probable intron-encoded endonuclease 4.